Here is a 368-residue protein sequence, read N- to C-terminus: Agmatine deiminase (368 aa).

The Amidino-cysteine intermediate role is filled by cysteine 357.

It belongs to the agmatine deiminase family. As to quaternary structure, homodimer.

It carries out the reaction agmatine + H2O = N-carbamoylputrescine + NH4(+). The protein operates within amine and polyamine biosynthesis; putrescine biosynthesis via agmatine pathway; N-carbamoylputrescine from agmatine: step 1/1. Functionally, mediates the hydrolysis of agmatine into N-carbamoylputrescine in the arginine decarboxylase (ADC) pathway of putrescine biosynthesis, a basic polyamine. This Pseudomonas syringae pv. syringae (strain B728a) protein is Agmatine deiminase.